Reading from the N-terminus, the 31-residue chain is Conotoxin (31 aa).

Belongs to the conotoxin S superfamily. Contains 5 disulfide bonds. Expressed by the venom duct.

It localises to the secreted. The chain is Conotoxin from Conus striatus (Striated cone).